Here is a 41-residue protein sequence, read N- to C-terminus: Competence-stimulating peptide type 1 (41 aa).

The propeptide occupies 1–24 (MKNTVKLEQFVALKEKDLQKIKGG).

The protein belongs to the ComC family.

Its subcellular location is the secreted. Its function is as follows. Acts as a pheromone, induces cells to develop competence for genetic transformation. This Streptococcus pneumoniae protein is Competence-stimulating peptide type 1 (comC1).